The chain runs to 374 residues: Flagellar P-ring protein (374 aa).

The first 29 residues, 1–29 (MSGLGFTGVVRIAVMALLALAFLGAPAHA), serve as a signal peptide directing secretion. Polar residues predominate over residues 296-311 (ESPQVSQPNPLSNGRT). Positions 296–316 (ESPQVSQPNPLSNGRTVMTPR) are disordered.

Belongs to the FlgI family. As to quaternary structure, the basal body constitutes a major portion of the flagellar organelle and consists of four rings (L,P,S, and M) mounted on a central rod.

Its subcellular location is the periplasm. It localises to the bacterial flagellum basal body. Functionally, assembles around the rod to form the L-ring and probably protects the motor/basal body from shearing forces during rotation. The protein is Flagellar P-ring protein of Nitrobacter winogradskyi (strain ATCC 25391 / DSM 10237 / CIP 104748 / NCIMB 11846 / Nb-255).